A 160-amino-acid polypeptide reads, in one-letter code: Anaerobic nitrite reductase HBII (160 aa).

One can recognise a Globin domain in the interval 8-157 (GFTEEQEALV…LVAAIKLEMK (150 aa)). Positions 41-45 (EIAPS) match the Homodimerization motif. Heme b is bound by residues Ser51, Lys65, His69, Lys99, Ser103, and His104. The Homodimerization motif lies at 111-123 (DEHFEVTKFALLE).

Belongs to the plant globin family. Homodimer. Requires heme b as cofactor.

Its subcellular location is the cytoplasm. The protein resides in the nucleus. The enzyme catalyses Fe(III)-heme b-[protein] + nitric oxide + H2O = Fe(II)-heme b-[protein] + nitrite + 2 H(+). In terms of biological role, phytoglobin that reduces nitrite to nitric oxide (NO) under anoxic conditions (e.g. during flooding or in waterlogged soil) and upon root nodulation. Required for general plant development and during nodulation, especially for the onset of symbiosis. Monitors nitric oxide (NO) levels during early phase of the nitrogen-fixing symbiosis and buffers oxygen in functioning nodules. May not function as an oxygen storage or transport protein. Has an unusually high affinity for O(2) through a hexacoordinate heme iron because of a very low dissociation constant. This is Anaerobic nitrite reductase HBII from Casuarina glauca (Swamp oak).